A 1331-amino-acid chain; its full sequence is Contactin-associated protein-like 2 (1331 aa).

A signal peptide spans 1-27 (MQAAPRAGCGAALLLWIVSSCLCRAWT). Topologically, residues 28-1262 (APSTSQKCDE…IRNGVNRNSA (1235 aa)) are extracellular. The 147-residue stretch at 35-181 (CDEPLVSGLP…IGLRIEVYGC (147 aa)) folds into the F5/8 type C domain. A disulfide bond links Cys35 and Cys181. In terms of domain architecture, Laminin G-like 1 spans 216–368 (FKTSESEGVI…SNVGNLSFSC (153 aa)). Asn289, Asn346, Asn363, Asn379, Asn436, Asn506, Asn507, and Asn546 each carry an N-linked (GlcNAc...) asparagine glycan. Cys336 and Cys368 are disulfide-bonded. Residues 401-552 (FRTWNPNGLL…SFANVSIDMC (152 aa)) form the Laminin G-like 2 domain. 4 disulfide bridges follow: Cys520–Cys552, Cys558–Cys569, Cys563–Cys578, and Cys580–Cys590. The 38-residue stretch at 554 to 591 (IIDRCVPNHCEHGGKCSQTWDSFKCTCDETGYSGATCH) folds into the EGF-like 1 domain. The 207-residue stretch at 592 to 798 (NSIYEPSCEA…LRCQGDRNYW (207 aa)) folds into the Fibrinogen C-terminal domain. N-linked (GlcNAc...) asparagine glycosylation is found at Asn630 and Asn735. One can recognise a Laminin G-like 3 domain in the interval 799–963 (NAASFPNPSS…KVTSGFISGC (165 aa)). Disulfide bonds link Cys936–Cys963, Cys967–Cys980, Cys974–Cys989, and Cys991–Cys1001. In terms of domain architecture, EGF-like 2 spans 963-1002 (CSGHCTSYGTNCENGGKCLERYHGYSCDCSNTAYDGTFCN). The segment at 1026–1045 (ARDSSSRVDNAPDQQNSHPD) is disordered. Residues 1055–1214 (FSTTKAPCIL…IQGELVESNC (160 aa)) form the Laminin G-like 4 domain. Residues Asn1116 and Asn1198 are each glycosylated (N-linked (GlcNAc...) asparagine). A disulfide bond links Cys1178 and Cys1214. The helical transmembrane segment at 1263–1283 (IIGGVIAVVIFTILCTLVFLI) threads the bilayer. Over 1284 to 1331 (RYMFRHKGTYHTNEAKGAESAESADAAIMNNDPNFTETIDESKKEWLI) the chain is Cytoplasmic. Ser1303 and Ser1306 each carry phosphoserine.

It belongs to the neurexin family. In terms of assembly, interacts (via C-terminus) with KCNA2. Interacts with GPR37. Predominantly expressed in nervous system.

The protein localises to the membrane. The protein resides in the cell projection. It localises to the axon. It is found in the cell junction. Its subcellular location is the paranodal septate junction. In terms of biological role, required for gap junction formation. Required, with CNTNAP1, for radial and longitudinal organization of myelinated axons. Plays a role in the formation of functional distinct domains critical for saltatory conduction of nerve impulses in myelinated nerve fibers. Demarcates the juxtaparanodal region of the axo-glial junction. This is Contactin-associated protein-like 2 (CNTNAP2) from Homo sapiens (Human).